Reading from the N-terminus, the 328-residue chain is Beta-agarase C (328 aa).

Residues 1-17 form the signal peptide; it reads MNLTKMAVFAASLFCLA. The propeptide occupies 18–67; it reads CKNDIDTELEKKSIPESEIQKSEEKLPNEEELTPTDPDEETNKEETVTAN. A compositionally biased stretch (basic and acidic residues) spans 26–45; the sequence is LEKKSIPESEIQKSEEKLPN. The disordered stretch occupies residues 26–61; that stretch reads LEKKSIPESEIQKSEEKLPNEEELTPTDPDEETNKE. Positions 46 to 59 are enriched in acidic residues; sequence EEELTPTDPDEETN. The GH16 domain maps to 70–328; that stretch reads YDFTGNTPPP…WIHTYQLVEE (259 aa). Residues Trp-110, 119–129, 133–135, Glu-188, Glu-193, and Arg-224 each bind substrate; these read KAENSGVSDGK and KAT. The active-site Nucleophile is Glu-188. The active-site Proton donor is Glu-193.

Belongs to the glycosyl hydrolase 16 family.

Its subcellular location is the secreted. It carries out the reaction Hydrolysis of (1-&gt;4)-beta-D-galactosidic linkages in agarose, giving the tetramer as the predominant product.. Cleaves the beta-1,4-linkages between beta-D-galactose and alpha-L-3,6-anhydro-galactose residues in agarose. Cleaves agarose in a random manner with retention of the anomeric-bond configuration, producing beta-anomers that give rise progressively to alpha-anomers when mutarotation takes place. This chain is Beta-agarase C (agaC), found in Zobellia galactanivorans (strain DSM 12802 / CCUG 47099 / CIP 106680 / NCIMB 13871 / Dsij).